The chain runs to 983 residues: 26S proteasome regulatory subunit RPN1 (983 aa).

Basic and acidic residues predominate over residues 1–26; it reads MSTDKKKEEVPKPETEDLTVKDETKN. Disordered regions lie at residues 1–44 and 169–188; these read MSTD…EDQK and VEKE…QPPH. PC repeat units follow at residues 415–447, 448–484, 485–519, 520–557, and 563–595; these read SAVA…EVKA, GGLL…KIST, AAIL…SLEL, AAIA…ELKS, and LALS…MTSA. Disordered stretches follow at residues 625-644 and 662-724; these read AVKS…SQED and EPQG…GAND. Over residues 630–642 the composition is skewed to acidic residues; sequence DEDEDEDNEELSQ. Positions 688-705 are enriched in basic and acidic residues; that stretch reads NVKKEENEEEKTEKSEKT. Acidic residues predominate over residues 706–718; it reads ENDEEEEDEEESK. PC repeat units follow at residues 768-799 and 800-834; these read LAMG…DVSM and NSIF…EQDA.

Belongs to the proteasome subunit S2 family.

Acts as a regulatory subunit of the 26 proteasome which is involved in the ATP-dependent degradation of ubiquitinated proteins. This is 26S proteasome regulatory subunit RPN1 (RPN1) from Candida glabrata (strain ATCC 2001 / BCRC 20586 / JCM 3761 / NBRC 0622 / NRRL Y-65 / CBS 138) (Yeast).